The primary structure comprises 126 residues: Profilin (126 aa).

The protein belongs to the profilin family. As to quaternary structure, occurs in many kinds of cells as a complex with monomeric actin in a 1:1 ratio.

The protein resides in the cytoplasm. Its subcellular location is the cytoskeleton. Functionally, binds to actin and affects the structure of the cytoskeleton. At high concentrations, profilin prevents the polymerization of actin, whereas it enhances it at low concentrations. By binding to PIP2, it inhibits the formation of IP3 and DG. In Bombyx mori (Silk moth), this protein is Profilin.